We begin with the raw amino-acid sequence, 393 residues long: MTRIGTPLSPTATRVLLCGCGELGKEVVIELQRLGVEVIAVDRYANAPAMQVAHRSHVVNMLDGVALRAVIEAEKPHYIVPEIEAIATATLVELENEGFNVVPTARATQLTMNREGIRRLAAEELDLPTSPYHFADTFEDYAKAVADVGYPCVVKPVMSSSGKGQSLLRSDADLQKSWDYAQEGGRAGKGRVIIEGFIDFDYEITLLTVRHVGGTTYLEPVGHRQEKGDYQESWQPQAMSPKALAESQRVAKAVTDALGGRGLFGVELFVKGDQVWFSEVSPRPHDTGLVTLISQDLSQFALHARAILGLPIPVVRQFGPSASAVILPEGQSQQTSFANLGAALSEPDTAIRLFGKPEINGQRRMGVCLARDESIEAARAKATRAAQAVKVEF.

N(1)-(5-phospho-beta-D-ribosyl)glycinamide is bound by residues Glu-22–Leu-23 and Glu-82. Residues Arg-114, Lys-155, Ser-160 to Gln-165, Glu-195 to Ile-198, and Glu-203 each bind ATP. An ATP-grasp domain is found at Arg-119–Leu-308. 2 residues coordinate Mg(2+): Glu-267 and Glu-279. N(1)-(5-phospho-beta-D-ribosyl)glycinamide-binding positions include Asp-286, Lys-356, and Arg-363–Arg-364.

Belongs to the PurK/PurT family. In terms of assembly, homodimer.

It catalyses the reaction N(1)-(5-phospho-beta-D-ribosyl)glycinamide + formate + ATP = N(2)-formyl-N(1)-(5-phospho-beta-D-ribosyl)glycinamide + ADP + phosphate + H(+). It participates in purine metabolism; IMP biosynthesis via de novo pathway; N(2)-formyl-N(1)-(5-phospho-D-ribosyl)glycinamide from N(1)-(5-phospho-D-ribosyl)glycinamide (formate route): step 1/1. Its function is as follows. Involved in the de novo purine biosynthesis. Catalyzes the transfer of formate to 5-phospho-ribosyl-glycinamide (GAR), producing 5-phospho-ribosyl-N-formylglycinamide (FGAR). Formate is provided by PurU via hydrolysis of 10-formyl-tetrahydrofolate. The protein is Formate-dependent phosphoribosylglycinamide formyltransferase of Pseudomonas putida (strain W619).